A 186-amino-acid polypeptide reads, in one-letter code: ATP synthase subunit delta (186 aa).

Belongs to the ATPase delta chain family. As to quaternary structure, F-type ATPases have 2 components, F(1) - the catalytic core - and F(0) - the membrane proton channel. F(1) has five subunits: alpha(3), beta(3), gamma(1), delta(1), epsilon(1). F(0) has three main subunits: a(1), b(2) and c(10-14). The alpha and beta chains form an alternating ring which encloses part of the gamma chain. F(1) is attached to F(0) by a central stalk formed by the gamma and epsilon chains, while a peripheral stalk is formed by the delta and b chains.

The protein localises to the cell inner membrane. F(1)F(0) ATP synthase produces ATP from ADP in the presence of a proton or sodium gradient. F-type ATPases consist of two structural domains, F(1) containing the extramembraneous catalytic core and F(0) containing the membrane proton channel, linked together by a central stalk and a peripheral stalk. During catalysis, ATP synthesis in the catalytic domain of F(1) is coupled via a rotary mechanism of the central stalk subunits to proton translocation. Functionally, this protein is part of the stalk that links CF(0) to CF(1). It either transmits conformational changes from CF(0) to CF(1) or is implicated in proton conduction. The sequence is that of ATP synthase subunit delta from Brucella melitensis biotype 2 (strain ATCC 23457).